A 281-amino-acid polypeptide reads, in one-letter code: Probable endonuclease 4 (281 aa).

Residues histidine 69, histidine 109, glutamate 145, aspartate 179, histidine 182, histidine 216, aspartate 229, histidine 231, and glutamate 261 each coordinate Zn(2+).

This sequence belongs to the AP endonuclease 2 family. It depends on Zn(2+) as a cofactor.

It carries out the reaction Endonucleolytic cleavage to 5'-phosphooligonucleotide end-products.. In terms of biological role, endonuclease IV plays a role in DNA repair. It cleaves phosphodiester bonds at apurinic or apyrimidinic (AP) sites, generating a 3'-hydroxyl group and a 5'-terminal sugar phosphate. This chain is Probable endonuclease 4, found in Nautilia profundicola (strain ATCC BAA-1463 / DSM 18972 / AmH).